A 481-amino-acid polypeptide reads, in one-letter code: Ankyrin repeat, SAM and basic leucine zipper domain-containing protein 1 (481 aa).

The span at 1–16 shows a compositional bias: gly residues; that stretch reads MASGGLRGLAVAGGGE. A disordered region spans residues 1-23; it reads MASGGLRGLAVAGGGESSDSEDD. Residues Ser17, Ser18, and Ser20 each carry the phosphoserine modification. 6 ANK repeats span residues 45–74, 78–107, 110–144, 148–177, 181–210, and 214–243; these read EKNE…SVDS, YGWT…NASF, DKQT…DPNV, RLMT…EVNT, NGYT…NKML, and DGKI…PLEG. The SAM domain maps to 272–334; the sequence is SYTAFGDLEI…KILSALKELE (63 aa).

As to quaternary structure, interacts with DDX4, PIWIL1, RANBP9 and TDRD1.

It is found in the cytoplasm. Functionally, plays a central role during spermatogenesis by repressing transposable elements and preventing their mobilization, which is essential for the germline integrity. Acts via the piRNA metabolic process, which mediates the repression of transposable elements during meiosis by forming complexes composed of piRNAs and Piwi proteins and governs the methylation and subsequent repression of transposons. Its association with pi-bodies suggests a participation in the primary piRNAs metabolic process. Required prior to the pachytene stage to facilitate the production of multiple types of piRNAs, including those associated with repeats involved in the regulation of retrotransposons. May act by mediating protein-protein interactions during germ cell maturation. The chain is Ankyrin repeat, SAM and basic leucine zipper domain-containing protein 1 (ASZ1) from Microcebus murinus (Gray mouse lemur).